We begin with the raw amino-acid sequence, 118 residues long: Large ribosomal subunit protein bL20 (118 aa).

The protein belongs to the bacterial ribosomal protein bL20 family.

Functionally, binds directly to 23S ribosomal RNA and is necessary for the in vitro assembly process of the 50S ribosomal subunit. It is not involved in the protein synthesizing functions of that subunit. This chain is Large ribosomal subunit protein bL20, found in Thermosipho africanus (strain TCF52B).